The primary structure comprises 907 residues: Potassium channel AKT3 (907 aa).

Residues 1-75 (MPTTKCAVPL…YDRRYELWNN (75 aa)) lie on the Cytoplasmic side of the membrane. A helical transmembrane segment spans residues 76 to 96 (YLILLVVYSAWVTPFEFGFVP). Residues 97–102 (EPAGAL) lie on the Extracellular side of the membrane. A helical transmembrane segment spans residues 103–123 (AAADNAVNAFFAVDIVLTFFV). At 124–146 (AYTDPKTFLLQDDPRKIALRYIT) the chain is on the cytoplasmic side. The helical transmembrane segment at 147 to 167 (TWFVLDVVATIPTELARRILP) threads the bilayer. Topologically, residues 168–174 (PDLRSYG) are extracellular. Residues 175–195 (FFGILRLWRLHRVGILFARLE) form a helical; Voltage-sensor membrane-spanning segment. Topologically, residues 196–209 (KDRKFSYFWVRCVK) are cytoplasmic. A helical transmembrane segment spans residues 210–230 (LVCVTLFAVHCSACFYYLLAD). The Extracellular segment spans residues 231–257 (RYPDPTNTWISAYMPNFHKASIWSRYV). The pore-forming intramembrane region spans 258-277 (ASMYWSITTLSTVGYGDMHA). The Extracellular portion of the chain corresponds to 278 to 288 (ENTGEMVFTTT). Residues 289–309 (YMLFNLGLTAYIIGNMTNLVV) form a helical membrane-spanning segment. Residues 310–907 (HGTSRTRKFR…VPPENRSRNQ (598 aa)) lie on the Cytoplasmic side of the membrane. 388–512 (LFEGVSNDLI…TIVMNNLIQY (125 aa)) serves as a coordination point for a nucleoside 3',5'-cyclic phosphate. ANK repeat units follow at residues 539–568 (DFPITLCFAASKGDSFLLHQLLKRGLDPNE), 572–601 (YGRTALHIAASNGNEQCVRLLLENGADSNS), 605–634 (EGRVPLWEALCRRHQTVVQLLVDAGADLSG), 636–665 (DAAPYARVAVEQNDAALLGEIVRHGGDVSG), and 670–699 (DGTTALHRAVLDGNVQMARLLLEHGADADA). Disordered regions lie at residues 726-779 (ATRH…TPQR) and 801-824 (GGYRGGGGGGGAAAERERSSSSPP). Residues 754 to 776 (SSPSSSSRRGRTSSTSAASARST) are compositionally biased toward low complexity. Gly residues predominate over residues 803–812 (YRGGGGGGGA). In terms of domain architecture, KHA spans 827 to 907 (RVAISCPESR…VPPENRSRNQ (81 aa)).

This sequence belongs to the potassium channel family. Plant (TC 1.A.1.4) subfamily.

It is found in the membrane. Probable inward-rectifying potassium channel. Assuming opened or closed conformations in response to the voltage difference across the membrane, the channel is activated by hyperpolarization. The protein is Potassium channel AKT3 of Oryza sativa subsp. japonica (Rice).